The primary structure comprises 528 residues: Glutamate--cysteine ligase (528 aa).

The protein belongs to the glutamate--cysteine ligase type 1 family. Type 1 subfamily.

It catalyses the reaction L-cysteine + L-glutamate + ATP = gamma-L-glutamyl-L-cysteine + ADP + phosphate + H(+). Its pathway is sulfur metabolism; glutathione biosynthesis; glutathione from L-cysteine and L-glutamate: step 1/2. The polypeptide is Glutamate--cysteine ligase (Janthinobacterium sp. (strain Marseille) (Minibacterium massiliensis)).